A 257-amino-acid polypeptide reads, in one-letter code: Zinc import ATP-binding protein ZnuC (257 aa).

The ABC transporter domain occupies 6–221 (VRLEQITVAF…AFVETFGHQV (216 aa)). Residue 38–45 (GPNGAGKT) participates in ATP binding.

Belongs to the ABC transporter superfamily. Zinc importer (TC 3.A.1.15.5) family. As to quaternary structure, the complex is composed of two ATP-binding proteins (ZnuC), two transmembrane proteins (ZnuB) and a solute-binding protein (ZnuA).

It localises to the cell inner membrane. The catalysed reaction is Zn(2+)(out) + ATP(in) + H2O(in) = Zn(2+)(in) + ADP(in) + phosphate(in) + H(+)(in). Part of the ABC transporter complex ZnuABC involved in zinc import. Responsible for energy coupling to the transport system. This chain is Zinc import ATP-binding protein ZnuC, found in Marinobacter nauticus (strain ATCC 700491 / DSM 11845 / VT8) (Marinobacter aquaeolei).